Consider the following 174-residue polypeptide: Transcriptional repressor NrdR (174 aa).

Residues 3–34 (CPICHFPETDVIDTRKLYEGEVIRRRRKCRAC) fold into a zinc finger. Residues 49 to 139 (LMVVKKDGTR…VYRSFADIGK (91 aa)) enclose the ATP-cone domain. The segment at 151 to 174 (EGTRNGHSSAATTDQGTTDNHSRM) is disordered. A compositionally biased stretch (polar residues) spans 155-174 (NGHSSAATTDQGTTDNHSRM).

It belongs to the NrdR family. Zn(2+) serves as cofactor.

Its function is as follows. Negatively regulates transcription of bacterial ribonucleotide reductase nrd genes and operons by binding to NrdR-boxes. This Chloroflexus aggregans (strain MD-66 / DSM 9485) protein is Transcriptional repressor NrdR.